The chain runs to 432 residues: MGNNVVVLGAQWGDEGKGKIVDLLTERAKYVVRYQGGHNAGHTLVINGEKTVLHLIPSGILRENVTSIIGNGVVLSPAALMKEMKELEDRGIPVRERLLLSEACPLILDYHVALDNAREKARGAKAIGTTGRGIGPAYEDKVARRGLRVGDLFDKETFAEKLKEVMEYHNFQLVNYYKAEAVDYQKVLDDTMAVADILTSMVVDVSDLLDQARQRGDFVMFEGAQGTLLDIDHGTYPYVTSSNTTAGGVATGSGLGPRYVDYVLGILKAYSTRVGAGPFPTELFDETGEFLCKQGNEYGATTGRRRRTGWLDTVAVRRAVQLNSLSGFCLTKLDVLDGLKEVKLCVAYRMPDGREVTTTPLAADDWKGVEPIYETMPGWSESTFGVKDRSGLPQAALNYIKRIEELTGVPIDIISTGPDRTETMILRDPFDA.

GTP contacts are provided by residues 13–19 (GDEGKGK) and 41–43 (GHT). Catalysis depends on Asp14, which acts as the Proton acceptor. 2 residues coordinate Mg(2+): Asp14 and Gly41. Residues 14–17 (DEGK), 39–42 (NAGH), Thr130, Arg144, Gln225, Thr240, and Arg304 each bind IMP. The active-site Proton donor is the His42. Substrate is bound at residue 300-306 (ATTGRRR). GTP is bound by residues Arg306, 332–334 (KLD), and 415–417 (STG).

Belongs to the adenylosuccinate synthetase family. Homodimer. Mg(2+) serves as cofactor.

Its subcellular location is the cytoplasm. The enzyme catalyses IMP + L-aspartate + GTP = N(6)-(1,2-dicarboxyethyl)-AMP + GDP + phosphate + 2 H(+). The protein operates within purine metabolism; AMP biosynthesis via de novo pathway; AMP from IMP: step 1/2. In terms of biological role, plays an important role in the de novo pathway of purine nucleotide biosynthesis. Catalyzes the first committed step in the biosynthesis of AMP from IMP. The protein is Adenylosuccinate synthetase of Salmonella paratyphi C (strain RKS4594).